The primary structure comprises 201 residues: Recombination protein RecR (201 aa).

The segment at 57–72 (CQVCYSLSDNDICDIC) adopts a C4-type zinc-finger fold. Residues 80-177 (NKICIVESYP…RITRITYGIS (98 aa)) form the Toprim domain.

Belongs to the RecR family.

Its function is as follows. May play a role in DNA repair. It seems to be involved in an RecBC-independent recombinational process of DNA repair. It may act with RecF and RecO. The chain is Recombination protein RecR from Brachyspira hyodysenteriae (strain ATCC 49526 / WA1).